The primary structure comprises 1399 residues: MVVVSKNNEQQSLILTTELLRTAIFNISYIRGLFPVRYFKDMSVPALDLKMKKLMPMDAESRRLIGWMEKGVYDALHKKHLKKLIFYICETVDGPLIEEYIFSFSYSDSDSQDVRMNINITGINTYGGTLNSTADNSTADMTLNQMSSVDEDFGQNARRSNAFVTYQRFSVYISFHIANYRLCYFFASVQRTILMKLLYYEYVPPDYQPPFFRGCSEEEEAQYVWPKIPLRMEIGNVNSQHHVLTVKVKSVLDPYDPCEDENDNMQDDERSKGPDSLHDDQPCKVFTKPSKLILTENKDADHGEVNEEKLLLITPICEILQDVKQDQVEHQLAKVKDTKGRPASIVQNPILQSHEYDIRRLKARLQRLERHISVPDSPQEGIRKWFAAVSSQLFYKVMEACTRRKPILGDAILSSTVKVQNFNAKICSKLLKKPASIYRKKHFTLNSASLRISGLAGSIFAWAVGFCLFSAQIGHVFVQPKTRSSESKPKVTMEELEEKLTPPSSEPKSAPPSSEPKSAPPSSEPLEKLAVIRRILPEIFAQRCGQRNSSFEAFAQRRTTYDYYNIRLNPREIIFRRLQEESKVALALSSANYFVLSILYRFFRQWSEVSLVRRNSRLTGNPSNEAQSSRSNRIEIPTLLDEPDREGSGGHLAAPEDPVDFLAQFDPLIDLEDAYNTQPQYTEAEVNARLLHEDHVEFDLVPVVSWNTEITAKKTLSTTESVAEVFALCGSGDRPLTCMIPGENERPWNPPRGYVCMYEAYFRQCHLWFPIPSLIISFLNRRHMAFSQLTPAAICNFVAALTFGAEEGYLVNVRCFEEMTTLKAIRSPGYWVVNNRPKHNFLPGPKVSNFKNWEEYYFYVRVDLESYERPFSGRKRMWTEFPDRYRPSPDFPVEFEGVLEAIFRARRRTWKDVTRSRVNRIMGKVRKSFISFAAGLLNMPPPPAPIEEERQPLDGEAAASNPPVSAGPSGVDQVSHEMVNPESQDRMCLEGADVVPAQEIAECDRSQSVQVVEPEVQNITDDRSVVVYAAPPAGEEVNTGLTILDQDKDETVAEPGISRRSREEKGKGGANQSKKRSASEAGLDEAAAPKTFRLSRGETLNSDQFTFKYSGEKFLVRDQEAASHLWRNLMLPGTKDFPNPDDLVLKEGYQKFARSSLETAALANDLIATYDRKLKLKLADREAFDNLKKCADQAKAIYAKDMKEMASLRDAAEIHKAEMSSLNDEVKRLNSREADLQKEFSDLQVALVAVKEHGERECNRLRNDRAAKVARTTKKAQARLDRVKAYLKEQEDLVGPKVDAENQARGAEEIVGILMQRGAKIAASELSGLKELTKRATDEVNALNVIELGDDDLNMSPDQLGFSRQISQVAPVADQHGSNVDLLAEVIRRVSVEETNQTT.

The HORMA domain occupies 10–248 (QQSLILTTEL…SQHHVLTVKV (239 aa)). Acidic residues predominate over residues 257-266 (PCEDENDNMQ). Disordered regions lie at residues 257–281 (PCEDENDNMQDDERSKGPDSLHDDQ), 487–525 (SKPKVTMEELEEKLTPPSSEPKSAPPSSEPKSAPPSSEP), 617–656 (RLTGNPSNEAQSSRSNRIEIPTLLDEPDREGSGGHLAAPE), 940–974 (PPPPAPIEEERQPLDGEAAASNPPVSAGPSGVDQV), and 1045–1090 (DQDK…AAPK). Basic and acidic residues predominate over residues 267–281 (DDERSKGPDSLHDDQ). Residues 509–523 (SAPPSSEPKSAPPSS) show a composition bias toward pro residues. The span at 617–631 (RLTGNPSNEAQSSRS) shows a compositional bias: polar residues. Positions 1205 to 1246 (MASLRDAAEIHKAEMSSLNDEVKRLNSREADLQKEFSDLQVA) form a coiled coil.

Its subcellular location is the chromosome. It localises to the nucleus. Functionally, required for normal meiosis. This Arabidopsis thaliana (Mouse-ear cress) protein is Meiosis-specific protein ASY2.